A 319-amino-acid polypeptide reads, in one-letter code: Ferrochelatase (319 aa).

2 residues coordinate Fe cation: H194 and E275.

The protein belongs to the ferrochelatase family.

The protein localises to the cytoplasm. The catalysed reaction is heme b + 2 H(+) = protoporphyrin IX + Fe(2+). It functions in the pathway porphyrin-containing compound metabolism; protoheme biosynthesis; protoheme from protoporphyrin-IX: step 1/1. Its function is as follows. Catalyzes the ferrous insertion into protoporphyrin IX. This chain is Ferrochelatase, found in Vibrio vulnificus (strain CMCP6).